The sequence spans 343 residues: Dihydroorotase (343 aa).

His14 and His16 together coordinate Zn(2+). Residues 16 to 18 (HLR) and Asn42 each bind substrate. Residues Lys99, His136, and His174 each contribute to the Zn(2+) site. An N6-carboxylysine modification is found at Lys99. His136 provides a ligand contact to substrate. Substrate is bound at residue Leu219. Residue Asp247 coordinates Zn(2+). Asp247 is a catalytic residue. Substrate-binding residues include His251 and Ala263.

The protein belongs to the metallo-dependent hydrolases superfamily. DHOase family. Class II DHOase subfamily. In terms of assembly, homodimer. Zn(2+) serves as cofactor.

The catalysed reaction is (S)-dihydroorotate + H2O = N-carbamoyl-L-aspartate + H(+). It participates in pyrimidine metabolism; UMP biosynthesis via de novo pathway; (S)-dihydroorotate from bicarbonate: step 3/3. In terms of biological role, catalyzes the reversible cyclization of carbamoyl aspartate to dihydroorotate. This is Dihydroorotase from Psychromonas ingrahamii (strain DSM 17664 / CCUG 51855 / 37).